A 567-amino-acid chain; its full sequence is Oxygen-dependent choline dehydrogenase (567 aa).

4–33 (DYIIIGAGSAGNVLAARLTEDADVTVLLLE) serves as a coordination point for FAD. The Proton acceptor role is filled by H473.

Belongs to the GMC oxidoreductase family. Requires FAD as cofactor.

It catalyses the reaction choline + A = betaine aldehyde + AH2. The enzyme catalyses betaine aldehyde + NAD(+) + H2O = glycine betaine + NADH + 2 H(+). It functions in the pathway amine and polyamine biosynthesis; betaine biosynthesis via choline pathway; betaine aldehyde from choline (cytochrome c reductase route): step 1/1. In terms of biological role, involved in the biosynthesis of the osmoprotectant glycine betaine. Catalyzes the oxidation of choline to betaine aldehyde and betaine aldehyde to glycine betaine at the same rate. This is Oxygen-dependent choline dehydrogenase from Yersinia pestis (strain Pestoides F).